Here is a 134-residue protein sequence, read N- to C-terminus: MDLRTGEYITAHQATSGVYTFGITNPLYFTITRHNQNPFNNKYNTLTFQIRFNHNLRKELGIHKCFLNFHIWTTLQSPTGHFLRVFKYQVCKYLNNLGVISLNNVVRAVDYVLFHVFERTIDVTENHEIKFNFY.

It belongs to the geminiviridae replication enhancer protein family. In terms of assembly, homooligomer. Interacts with the replication-associated protein (REP). Interacts with host proliferating cell nuclear antigen (PCNA). Interacts with host retinoblastoma-related protein 1 (RBR1), and may thereby deregulate the host cell cycle. Oligomerization and interaction with PCNA are necessary for optimal replication enhancement.

Its function is as follows. Increases viral DNA accumulation. Enhances infectivity and symptom expression. This chain is Replication enhancer protein, found in Tomato yellow leaf curl Sardinia virus (TYLCSV).